The sequence spans 775 residues: Transposon TX1 uncharacterized 82 kDa protein (775 aa).

The segment covering 1 to 10 has biased composition (basic and acidic residues); that stretch reads MGGNKKESYK. 3 disordered regions span residues 1-46, 256-277, and 535-565; these read MGGN…ASTS, PKGQIKTTAPVPAPSASNKTSY, and PIQDPADKTAGKDGEGGVVDTEEGSQTTSTV. Residues 35–46 are compositionally biased toward polar residues; the sequence is EPMSKSPIASTS. A compositionally biased stretch (basic and acidic residues) spans 539-549; that stretch reads PADKTAGKDGE.

This is Transposon TX1 uncharacterized 82 kDa protein from Xenopus laevis (African clawed frog).